The sequence spans 138 residues: Cysteine desulfuration protein SufE (138 aa).

Cys51 acts as the Cysteine persulfide intermediate in catalysis.

Belongs to the SufE family. As to quaternary structure, homodimer. Interacts with SufS.

Its subcellular location is the cytoplasm. It participates in cofactor biosynthesis; iron-sulfur cluster biosynthesis. Its function is as follows. Participates in cysteine desulfuration mediated by SufS. Cysteine desulfuration mobilizes sulfur from L-cysteine to yield L-alanine and constitutes an essential step in sulfur metabolism for biosynthesis of a variety of sulfur-containing biomolecules. Functions as a sulfur acceptor for SufS, by mediating the direct transfer of the sulfur atom from the S-sulfanylcysteine of SufS, an intermediate product of cysteine desulfuration process. The sequence is that of Cysteine desulfuration protein SufE from Pectobacterium atrosepticum (strain SCRI 1043 / ATCC BAA-672) (Erwinia carotovora subsp. atroseptica).